Reading from the N-terminus, the 156-residue chain is Movement protein P17 (156 aa).

Residues 38 to 54 (AEDAEEEAIAAQEELEF) are homodimerization. 2 disordered regions span residues 55-80 (PEDEAQARHSCLQRTTSWATPKEVSP) and 131-156 (AKYHPSSPTSTSSKLRRAAPKLIKRG). Positions 57-156 (DEAQARHSCL…RAAPKLIKRG (100 aa)) are RNA-binding. Phosphoserine is present on residues Ser-71, Ser-79, Ser-137, and Ser-140. Positions 144 to 156 (KLRRAAPKLIKRG) are enriched in basic residues.

Belongs to the polerovirus movement protein family. In terms of assembly, homodimer. Heterodimer with movement protein P3a. Post-translationally, expressed as a nonphosphorylated 20kDa form and a phosphorylated 22kDa form. Phosphorylated by a host PKC-related kinase. Serine phosphorylation is required for plamodesma targeting.

The protein resides in the host cell junction. Its subcellular location is the host plasmodesma. It localises to the host mitochondrion outer membrane. It is found in the host Golgi apparatus. The protein localises to the host chloroplast envelope. Functionally, together with movement protein P3a, facilitates long-distance movement of virions in host. Transports viral genome to neighboring plant cells directly through plasmosdesmata, without any budding. The movement protein allows efficient cell to cell propagation, by bypassing the host cell wall barrier. Binds ssRNA. The sequence is that of Movement protein P17 from Solanum tuberosum (Potato).